Here is an 856-residue protein sequence, read N- to C-terminus: DNA mismatch repair protein MutS (856 aa).

Residue 623-630 (GPNMSGKS) participates in ATP binding.

Belongs to the DNA mismatch repair MutS family.

Its function is as follows. This protein is involved in the repair of mismatches in DNA. It is possible that it carries out the mismatch recognition step. This protein has a weak ATPase activity. This is DNA mismatch repair protein MutS from Natronomonas pharaonis (strain ATCC 35678 / DSM 2160 / CIP 103997 / JCM 8858 / NBRC 14720 / NCIMB 2260 / Gabara) (Halobacterium pharaonis).